The primary structure comprises 436 residues: Histone acetyltransferase RTT109 (436 aa).

Positions serine 2–histidine 404 constitute a Rtt109-type HAT domain. Residues alanine 88–threonine 90 and arginine 97–arginine 101 contribute to the acetyl-CoA site. The segment at arginine 128–arginine 170 is interaction with VPS75. Acetyl-CoA is bound by residues phenylalanine 192, alanine 196, histidine 211–leucine 213, and tryptophan 221. Catalysis depends on aspartate 288, which acts as the Proton donor/acceptor. N6-acetyllysine; by autocatalysis is present on lysine 290. Residues leucine 419–leucine 433 are interaction with ASF1.

The protein belongs to the RTT109 family. As to quaternary structure, forms a complex composed of two RTT109 subunits and one VPS75 homodimer; each RTT109 subunit interacts predominantly with VPS75 instead of interacting with the other RTT109 subunit. Interacts with VPS75; the interaction is direct. Interacts (via C-terminus) with ASF1; the interaction is direct. Interacts with histone H3/H4 heterodimers via histone H3.

The protein localises to the nucleus. It catalyses the reaction L-lysyl-[histone] + acetyl-CoA = N(6)-acetyl-L-lysyl-[histone] + CoA + H(+). It carries out the reaction L-lysyl-[protein] + acetyl-CoA = N(6)-acetyl-L-lysyl-[protein] + CoA + H(+). Histone chaperone-dependent acetylase that modifies 'Lys-9', 'Lys-14', 'Lys-23', 'Lys-27', and 'Lys-56' on histone H3 (H3K9Ac, H3K14Ac and H3K23Ac, H3K27Ac, and H3K56Ac) to promote nucleosome assembly, genomic stability, DNA repair and transcriptional regulation during mitotic S-phase. Its residue selectivity is influenced by the acetylation status of histone H3, and also the presence of histone chaperone ASF1 that shifts selectivity to 'Lys-56' when H3K14Ac is already present. H3K56 acetylation weakens the interaction between the histone core and the surrounding DNA in the nucleosomal particle and drives chromatin disassembly. Autoacetylates. Independently of acetyltransferase activity, stimulates histone deposition by VPS75. Involved in regulation of Ty1 transposition. The sequence is that of Histone acetyltransferase RTT109 from Saccharomyces cerevisiae (strain ATCC 204508 / S288c) (Baker's yeast).